Here is a 453-residue protein sequence, read N- to C-terminus: mRNA cleavage and polyadenylation factor CLP1 (453 aa).

ATP-binding positions include glutamate 31, lysine 70, and 146–151 (NSGKTS).

The protein belongs to the Clp1 family. Clp1 subfamily. In terms of assembly, component of a pre-mRNA cleavage factor complex. Interacts directly with PCF11.

It localises to the nucleus. Functionally, required for endonucleolytic cleavage during polyadenylation-dependent pre-mRNA 3'-end formation. The polypeptide is mRNA cleavage and polyadenylation factor CLP1 (Scheffersomyces stipitis (strain ATCC 58785 / CBS 6054 / NBRC 10063 / NRRL Y-11545) (Yeast)).